A 279-amino-acid chain; its full sequence is MTLAYETVSENRSFGGIQGVYRHQSQATGTPMTFAIYLPPDARHGKVPVLWYLSGLTCTHENAMTKAGAQEWAAEYGIAVIFPDTSPRGEGVANDETYDLGQGAGFYVDATEAPWAPHFRMWHYVTHELPELVFNNFPLDREAQGITGHSMGGHGALTIAMTFPERYRSVSAFAPIAHPSESDWGRKQFAAYLGDDKAAWKRHDSTILMREKGYPGEVLIDQGASDQFLDLLKPEALAHAMAERRQPGTFRMQQGYDHSYFFVQSFMADHIRWHAERLG.

Residues S150, D226, and H258 each act as charge relay system in the active site.

This sequence belongs to the esterase D family.

It carries out the reaction S-formylglutathione + H2O = formate + glutathione + H(+). Functionally, serine hydrolase involved in the detoxification of formaldehyde. Hydrolyzes S-formylglutathione to glutathione and formate. This chain is S-formylglutathione hydrolase (fghA), found in Paracoccus denitrificans (strain Pd 1222).